The chain runs to 268 residues: Sexual development regulator velC (268 aa).

The span at 1–13 (MPHGFDKLLHPEP) shows a compositional bias: basic and acidic residues. Disordered stretches follow at residues 1–124 (MPHG…DNFS) and 142–165 (DPDPNSAPAHPSSISDPHISNPPH). Positions 14-26 (EPQSPSPPPPPRR) are enriched in pro residues. Residues 28–257 (STQSRYHLHI…ELGFVELKTR (230 aa)) form the Velvet domain. Over residues 92 to 121 (DGNRDREREREHERERERERETDGVARTDD) the composition is skewed to basic and acidic residues.

The protein belongs to the velvet family. VelC subfamily. In terms of assembly, interacts with velA and vosA.

It is found in the nucleus. Its function is as follows. Velvet-domain-containing protein that acts as a positive regulator of sexual development. The protein is Sexual development regulator velC of Penicillium rubens (strain ATCC 28089 / DSM 1075 / NRRL 1951 / Wisconsin 54-1255) (Penicillium chrysogenum).